The primary structure comprises 168 residues: Cell division inhibitor SulA (168 aa).

Residues 105–111 (ALETGNY) are ftsZ binding. Positions 161-168 (RIHSGMVH) are lon protease binding.

The protein belongs to the SulA family. In terms of assembly, interacts with FtsZ. In terms of processing, is rapidly cleaved and degraded by the Lon protease once DNA damage is repaired.

In terms of biological role, component of the SOS system and an inhibitor of cell division. Accumulation of SulA causes rapid cessation of cell division and the appearance of long, non-septate filaments. In the presence of GTP, binds a polymerization-competent form of FtsZ in a 1:1 ratio, thus inhibiting FtsZ polymerization and therefore preventing it from participating in the assembly of the Z ring. This mechanism prevents the premature segregation of damaged DNA to daughter cells during cell division. In Cronobacter sakazakii (strain ATCC BAA-894) (Enterobacter sakazakii), this protein is Cell division inhibitor SulA.